A 187-amino-acid polypeptide reads, in one-letter code: Probable carboxylesterase Culp7 (187 aa).

A disulfide bond links C15 and C69. S80 functions as the Nucleophile in the catalytic mechanism. A disulfide bridge links C151 with C158. D155 is a catalytic residue. Residue H167 is the Proton donor/acceptor of the active site.

It belongs to the cutinase family.

It localises to the cytoplasm. It is found in the cell membrane. Its subcellular location is the secreted. The protein resides in the cell wall. Functionally, may have a role in cell wall processes. Does not exhibit cutinase activity. The protein is Probable carboxylesterase Culp7 of Mycobacterium tuberculosis (strain ATCC 25618 / H37Rv).